A 158-amino-acid polypeptide reads, in one-letter code: Ribonuclease HI (158 aa).

The 142-residue stretch at 3-144 (ELKLIHIFTD…CDQLARAAAE (142 aa)) folds into the RNase H type-1 domain. 4 residues coordinate Mg(2+): aspartate 12, glutamate 50, aspartate 72, and aspartate 136.

It belongs to the RNase H family. As to quaternary structure, monomer. It depends on Mg(2+) as a cofactor.

The protein resides in the cytoplasm. It carries out the reaction Endonucleolytic cleavage to 5'-phosphomonoester.. Functionally, endonuclease that specifically degrades the RNA of RNA-DNA hybrids. The sequence is that of Ribonuclease HI from Shewanella oneidensis (strain ATCC 700550 / JCM 31522 / CIP 106686 / LMG 19005 / NCIMB 14063 / MR-1).